Reading from the N-terminus, the 329-residue chain is Malate dehydrogenase (329 aa).

Residue 12 to 18 (GAAGQIG) coordinates NAD(+). The substrate site is built by arginine 95 and arginine 101. NAD(+) contacts are provided by residues asparagine 108, glutamine 115, and 132–134 (VGN). Residues asparagine 134 and arginine 165 each contribute to the substrate site. Residue histidine 190 is the Proton acceptor of the active site.

Belongs to the LDH/MDH superfamily. MDH type 2 family.

It carries out the reaction (S)-malate + NAD(+) = oxaloacetate + NADH + H(+). Its function is as follows. Catalyzes the reversible oxidation of malate to oxaloacetate. The protein is Malate dehydrogenase of Polynucleobacter necessarius subsp. necessarius (strain STIR1).